A 117-amino-acid chain; its full sequence is Appetite-regulating hormone (117 aa).

A signal peptide spans 1–23 (MVSSATICSLLLLSMLWMDMAMA). S26 carries the O-decanoyl serine; alternate lipid modification. Residue S26 is the site of O-hexanoyl serine; alternate attachment. S26 carries the O-octanoyl serine; alternate lipid modification. A disordered region spans residues 28-68 (LSPEHQKAQQRKESKKPPAKLQPRALEGWLHPEDRGQAEEA). The segment covering 31–43 (EHQKAQQRKESKK) has biased composition (basic and acidic residues). Positions 52-75 (ALEGWLHPEDRGQAEEAEEELEIR) are cleaved as a propeptide — removed in mature form. L98 carries the leucine amide modification. The propeptide at 99-117 (GKFLQDILWEEVKEAPANK) is removed in mature form.

Belongs to the motilin family. Post-translationally, O-octanoylated by GOAT/MBOAT4. O-octanoylation is essential for ghrelin activity. The replacement of Ser-26 by aromatic tryptophan preserves ghrelin activity. Amidation of Leu-98 is essential for obestatin activity. Ghrelin is broadly expressed with higher expression in the stomach. Very low levels are detected in the hypothalamus, heart, lung, pancreas, intestine and adipose tissue. Obestatin is most highly expressed in jejunum, and also found in duodenum, stomach, pituitary, ileum, liver, hypothalamus and heart. Expressed in low levels in pancreas, cerebellum, cerebrum, kidney, testis, ovary colon and lung.

The protein localises to the secreted. In terms of biological role, ghrelin is the ligand for growth hormone secretagogue receptor type 1 (GHSR). Induces the release of growth hormone from the pituitary. Has an appetite-stimulating effect, induces adiposity and stimulates gastric acid secretion. Involved in growth regulation. Its function is as follows. Obestatin may be the ligand for GPR39. May have an appetite-reducing effect resulting in decreased food intake. May reduce gastric emptying activity and jejunal motility. The sequence is that of Appetite-regulating hormone (Ghrl) from Rattus norvegicus (Rat).